Consider the following 265-residue polypeptide: Secreted RxLR effector protein 146 (265 aa).

Positions 1-25 (MRYYTQVVAASLVATLAVVDSIVFA) are cleaved as a signal peptide. The RxLR-dEER signature appears at 32 to 50 (RFLRQDGATVTRGGKGEER). Asn-71 and Asn-148 each carry an N-linked (GlcNAc...) asparagine glycan.

Belongs to the RxLR effector family.

The protein resides in the secreted. Its subcellular location is the host nucleus. The protein localises to the host cytoplasm. In terms of biological role, secreted effector that completely suppresses the host cell death induced by cell death-inducing proteins. This is Secreted RxLR effector protein 146 from Plasmopara viticola (Downy mildew of grapevine).